We begin with the raw amino-acid sequence, 218 residues long: Superoxide dismutase [Mn], mitochondrial (218 aa).

Residues 1-21 constitute a mitochondrion transit peptide; sequence MLRFLSKNSVAAIRNVSIARG. H50 and H96 together coordinate Mn(2+). S129 is modified (phosphoserine). Residues D181 and H185 each coordinate Mn(2+).

The protein belongs to the iron/manganese superoxide dismutase family. As to quaternary structure, homodimer. It depends on Mn(2+) as a cofactor.

The protein resides in the mitochondrion matrix. It catalyses the reaction 2 superoxide + 2 H(+) = H2O2 + O2. Its function is as follows. Destroys superoxide anion radicals which are normally produced within the cells and which are toxic to biological systems. This Schizosaccharomyces pombe (strain 972 / ATCC 24843) (Fission yeast) protein is Superoxide dismutase [Mn], mitochondrial (sod2).